Consider the following 84-residue polypeptide: Turripeptide IX-03 (84 aa).

The first 21 residues, 1–21 (MGFYMLLTVALLLTSLMNVEA), serve as a signal peptide directing secretion. The propeptide occupies 22 to 39 (TPVDQAERSALEKSGLGN). 3 disulfides stabilise this stretch: Cys-48–Cys-70, Cys-55–Cys-74, and Cys-60–Cys-81.

Expressed by the venom duct.

It is found in the secreted. This is Turripeptide IX-03 from Gemmula speciosa (Splendid gem-turris).